The primary structure comprises 325 residues: Lactonase drp35 (325 aa).

Glutamate 46, serine 108, glycine 110, glutamate 128, threonine 131, tyrosine 133, aspartate 136, asparagine 183, aspartate 234, and serine 235 together coordinate Ca(2+). Aspartate 234 acts as the Proton donor in catalysis.

The protein belongs to the SMP-30/CGR1 family. Ca(2+) serves as cofactor.

It localises to the cytoplasm. Its function is as follows. Exhibits lactonase activity. Acts in cells with perturbed membrane integrity and is possibly related to the membrane homeostasis. The chain is Lactonase drp35 (drp35) from Staphylococcus haemolyticus (strain JCSC1435).